Reading from the N-terminus, the 289-residue chain is MIVCPNCNHPNPDGAVQCEACYTPLPATSNCPNCGATVQSDAAFCGQCGFNLHSVAAPAATVATIAPDVPVEVPPLANPDPLLELLQPNALGLDPVANENPPAPAPLPPTAVAAPPDATPVVVEVTPAPPPPEPVVVEASIPTPPPEPVAPPEPVPAVEPAPAPETVVAAPPSPARTQLQQITARLVHVQSDQEIELPPSLSVVHIGKPNDRIPPDVDVSGFANSEIVSRVHADIRLEGDAHYIEDVGSSNGTYINNLPLLPGNRHRLRPGDRISLGKGDLVTFLFKLA.

The DZANK-type zinc finger occupies 4 to 49; it reads CPNCNHPNPDGAVQCEACYTPLPATSNCPNCGATVQSDAAFCGQCG. A zinc finger lies at 18 to 48; the sequence is CEACYTPLPATSNCPNCGATVQSDAAFCGQC. Residues 204–260 enclose the FHA domain; the sequence is VHIGKPNDRIPPDVDVSGFANSEIVSRVHADIRLEGDAHYIEDVGSSNGTYINNLPL.

Putative heterocyst to vegetative cell connection. The protein is Protein FraH (fraH) of Nostoc sp. (strain PCC 7120 / SAG 25.82 / UTEX 2576).